Reading from the N-terminus, the 551-residue chain is L-lactate permease (551 aa).

Transmembrane regions (helical) follow at residues 13 to 33 (NIWL…FALI), 37 to 57 (LKGY…ALLF), 70 to 90 (VYGF…AVFV), 131 to 151 (GAAG…GLGF), 159 to 179 (LCLI…PILV), 194 to 214 (MVGR…MAIM), 244 to 264 (FIGP…CLTL), 366 to 386 (FDWF…SIVW), 405 to 425 (LALP…SNYS), 438 to 458 (TGHA…FLTG), 494 to 514 (VTGK…VGLV), and 530 to 550 (IFTC…TWMI).

It belongs to the lactate permease family.

It is found in the cell inner membrane. It carries out the reaction (S)-lactate(in) + H(+)(in) = (S)-lactate(out) + H(+)(out). The enzyme catalyses (R)-lactate(in) + H(+)(in) = (R)-lactate(out) + H(+)(out). It catalyses the reaction glycolate(in) + H(+)(in) = glycolate(out) + H(+)(out). Its function is as follows. Uptake of L-lactate across the membrane. Can also transport D-lactate and glycolate. Seems to be driven by a proton motive force. The sequence is that of L-lactate permease (lldP) from Escherichia coli O6:H1 (strain CFT073 / ATCC 700928 / UPEC).